Here is a 196-residue protein sequence, read N- to C-terminus: Probable phosphoheptose isomerase (196 aa).

Residues 43 to 196 (IVNVFNSGGK…MICSVIDSYY (154 aa)) enclose the SIS domain. A substrate-binding site is contributed by 58–60 (NGG). His-67 and Glu-71 together coordinate Zn(2+). Residues Glu-71, 100–101 (ND), 126–128 (STS), Ser-131, and Gln-178 contribute to the substrate site. The Zn(2+) site is built by Gln-178 and His-186.

The protein belongs to the SIS family. GmhA subfamily. Requires Zn(2+) as cofactor.

Its subcellular location is the cytoplasm. It carries out the reaction 2 D-sedoheptulose 7-phosphate = D-glycero-alpha-D-manno-heptose 7-phosphate + D-glycero-beta-D-manno-heptose 7-phosphate. It participates in carbohydrate biosynthesis; D-glycero-D-manno-heptose 7-phosphate biosynthesis; D-glycero-alpha-D-manno-heptose 7-phosphate and D-glycero-beta-D-manno-heptose 7-phosphate from sedoheptulose 7-phosphate: step 1/1. Functionally, catalyzes the isomerization of sedoheptulose 7-phosphate in D-glycero-D-manno-heptose 7-phosphate. This Thermoplasma volcanium (strain ATCC 51530 / DSM 4299 / JCM 9571 / NBRC 15438 / GSS1) protein is Probable phosphoheptose isomerase.